The following is a 94-amino-acid chain: Putative septation protein SpoVG (94 aa).

Belongs to the SpoVG family.

Functionally, could be involved in septation. The sequence is that of Putative septation protein SpoVG from Acholeplasma laidlawii (strain PG-8A).